The following is a 1033-amino-acid chain: MLRLWRYLCLLLTVWFLCNFGPVYVVRAQNRTGATTHPDEALALNSIFAAWRIRAPREWNISGELCSGAAIDASVLDSNPAYNPLIKCDCSFENSTICRITNIKVYAMEVVGSIPQQLWTLEYLTNLNLGQNVLTGSLPPALGNLTRMRWMTFGINALSGPIPKEIGLLTDLRLLSISSNNFSGSIPDEIGRCTKLQQIYIDSSGLSGGLPVSFANLVELEQAWIADMELTGQIPDFIGDWTKLTTLRILGTGLSGPIPASFSNLTSLTELRLGDISNGNSSLEFIKDMKSLSILVLRNNNLTGTIPSNIGEYSSLRQLDLSFNKLHGTIPASLFNLRQLTHLFLGNNTLNGSLPTQKGQSLSNVDVSYNDLSGSLPSWVSLPNLNLNLVANNFTLEGLDNRVLSGLNCLQKNFPCNRGKGIYSDFSINCGGPEIRSVTEAVFEREDEDLGPASFVVSAGQRWAASSVGLFAGSSNNIYISTSQSQFVNTLDSELFQSARLSASSLRYYGLGLENGGYTVTLQFAEIQILGSTSNTWRGLGRRRFDIYVQGRLVEKDFDVRRTAGDSTVRAVQREYKANVSQNHLEIHLFWAGKGTCCIPIQGAYGPLISAVGATPDFTPTVGNRPPSKGKSMTGTIVGVIVGVGLLSIISGVVIFIIRKRRKRYTDDEEILSMDVKPYTFTYSELKSATQDFDPSNKLGEGGFGPVYKGKLNDGREVAVKLLSVGSRQGKGQFVAEIVAISAVQHRNLVKLYGCCYEGEHRLLVYEYLPNGSLDQALFGEKTLHLDWSTRYEICLGVARGLVYLHEEARLRIVHRDVKASNILLDSKLVPKVSDFGLAKLYDDKKTHISTRVAGTIGYLAPEYAMRGHLTEKTDVYAFGVVALELVSGRPNSDENLEDEKRYLLEWAWNLHEKGREVELIDHQLTEFNMEEGKRMIGIALLCTQTSHALRPPMSRVVAMLSGDVEVSDVTSKPGYLTDWRFDDTTASSISGFPLRNTQASESFTSFVAPRSEISPRNNDARPMLGAQMNEGR.

The N-terminal stretch at 1-28 (MLRLWRYLCLLLTVWFLCNFGPVYVVRA) is a signal peptide. The Extracellular segment spans residues 29-636 (QNRTGATTHP…PSKGKSMTGT (608 aa)). Asn30, Asn60, and Asn94 each carry an N-linked (GlcNAc...) asparagine glycan. LRR repeat units follow at residues 97 to 121 (ICRI…LWTL), 122 to 145 (EYLT…LGNL), 147 to 169 (RMRW…IGLL), 170 to 193 (TDLR…IGRC), 195 to 217 (KLQQ…FANL), 241 to 264 (WTKL…SFSN), 265 to 288 (LTSL…FIKD), 289 to 313 (MKSL…IGEY), 314 to 337 (SSLR…LFNL), 339 to 361 (QLTH…KGQS), 363 to 382 (SNVD…WVSL), 383 to 406 (PNLN…VLSG), and 422 to 445 (IYSD…VFER). Residue Asn144 is glycosylated (N-linked (GlcNAc...) asparagine). An N-linked (GlcNAc...) asparagine glycan is attached at Asn181. 3 N-linked (GlcNAc...) asparagine glycosylation sites follow: Asn264, Asn280, and Asn301. N-linked (GlcNAc...) asparagine glycans are attached at residues Asn347 and Asn351. Asn393 is a glycosylation site (N-linked (GlcNAc...) asparagine). Asn579 carries an N-linked (GlcNAc...) asparagine glycan. A helical transmembrane segment spans residues 637–657 (IVGVIVGVGLLSIISGVVIFI). Residues 658-1033 (IRKRRKRYTD…MLGAQMNEGR (376 aa)) lie on the Cytoplasmic side of the membrane. A Phosphothreonine modification is found at Thr682. In terms of domain architecture, Protein kinase spans 693-951 (FDPSNKLGEG…LCTQTSHALR (259 aa)). ATP contacts are provided by residues 699–707 (LGEGGFGPV) and Lys721. Tyr766 bears the Phosphotyrosine mark. The active-site Proton acceptor is the Asp817. Residues Ser821 and Ser850 each carry the phosphoserine modification. 2 positions are modified to phosphothreonine: Thr851 and Thr856. Tyr864 is subject to Phosphotyrosine. The segment at 1012–1033 (SEISPRNNDARPMLGAQMNEGR) is disordered.

It belongs to the protein kinase superfamily. Ser/Thr protein kinase family.

The protein resides in the membrane. The catalysed reaction is L-seryl-[protein] + ATP = O-phospho-L-seryl-[protein] + ADP + H(+). It catalyses the reaction L-threonyl-[protein] + ATP = O-phospho-L-threonyl-[protein] + ADP + H(+). This Arabidopsis thaliana (Mouse-ear cress) protein is Probable LRR receptor-like serine/threonine-protein kinase At1g56140.